The chain runs to 168 residues: Skp-like protein (168 aa).

Positions 1–22 (MRKFTQFVLITAAIMAAPSAFA) are cleaved as a signal peptide.

It belongs to the Skp family.

This Pseudomonas aeruginosa (strain ATCC 15692 / DSM 22644 / CIP 104116 / JCM 14847 / LMG 12228 / 1C / PRS 101 / PAO1) protein is Skp-like protein.